The chain runs to 401 residues: MSSYNLPDDKGHFEQYGGIFTAETLMIAVTELKDAYAKFKDDEDFIREFEQDLKHYVGRETPLYHAQNLSKKLDGAQIYLKREDLNHTGAHKINNTIGQALLAKRMGKTRIIAETGAGQHGVATATVAARLGLECVVYMGEVDVARQALNVFRMKLLGATVIPVTLGSKTLKDSINEAMRDWVTNIDDTFYIIGTVVGPHPYPMMVRDFQSIIGKETKVQFAAQVGGLPDVLVACVGGGSNAIGLFHAFIDDASVEIYGVEAAGYGLEKGPTAHSAPLCAGSVGVLHGNRTYLMEDENGQIIEGHSISAGLDYPGVGPEHAYLKDSGRARYVAITDKEALEAFHVLTKVEGILPALESSHAVAYGIKLAKELGKDKHIIINLSGRGDKDIHTIAQIEGIEF.

Position 92 is an N6-(pyridoxal phosphate)lysine (K92).

The protein belongs to the TrpB family. As to quaternary structure, tetramer of two alpha and two beta chains. The cofactor is pyridoxal 5'-phosphate.

It carries out the reaction (1S,2R)-1-C-(indol-3-yl)glycerol 3-phosphate + L-serine = D-glyceraldehyde 3-phosphate + L-tryptophan + H2O. It functions in the pathway amino-acid biosynthesis; L-tryptophan biosynthesis; L-tryptophan from chorismate: step 5/5. Functionally, the beta subunit is responsible for the synthesis of L-tryptophan from indole and L-serine. The protein is Tryptophan synthase beta chain of Ruthia magnifica subsp. Calyptogena magnifica.